Reading from the N-terminus, the 806-residue chain is MSKLTTGSFSIEDLESVQITINNIVGAAKEAAEEKTKELGHMGPTPFPGLETYRDDWNLKLLDRYEPVVTPMCDQCCYCTYGPCDLSNNKRGACGIDMLGHNGREFFLRVITGTACHAAHGRHLLDHLIEVFGEELPLNLGQSDVLTPNITITTGQRPQTLGEIKPAMEHVEEQLTQLLATVHAGQESAEIDYDSKALFSGSLDHVGMEISDIVQIAALDFPKADPEAPLIEMGMGTIDKDKPFLCVIGHNVGGVTYMMDYMEEHELTDKVELGGLCCTAIDLTRYKEADRRPPYTKVVGSMSKELKIIRSGMPDVIVVDEQCVRGDIVPEAQKLKIPVIASNAKIMYGLPNRTDAGVEETIEELKSGAIPGAVILDYEKLGEISVRLAQEMHPIREAAGVREIPSDEQLKEWVDKCADCGACYLACPIELDIPEAMKFAKQGDFSYLEDLHDACIGCRRCEQVCKKEIPILSVIEKASQKIIAEEKGWMRAGRGQVSDAEIRAEGLNLVMGTTPGIIAIIGCPNYSDCAKAVYYIAEEFLKRNYIVVGTGCGSMDMGMYKDEDGKTLYERFPGGFQSGGLVNIGSCVSNAHITGAAQKVAGIFGGRTMEGNLAEIADYVLNRVGACGLAWGAFSQKASSIGTGCNIYGIPAVLGAHSSKYRRALIAKNYDESKWKVYDARNGEEMPIPPAPEFLLTTAETWQEAIPMMAKACLRPSDNSLGRSIKLTHWMELHDKYIGGLPEDWWKFIRTEADLPLAKRADLMKKLEAERGWEIDWKKKKIISGPKIKFDVSAQPTNLKRLCKGA.

Positions 73, 76, 77, 79, 84, and 94 each coordinate [4Fe-4S] cluster. Residue His117 participates in CO binding. 3 residues coordinate [Ni-4Fe-4S] cluster: His250, Cys278, and Cys323. 4Fe-4S ferredoxin-type domains lie at 406 to 436 (SDEQLKEWVDKCADCGACYLACPIELDIPEA) and 445 to 475 (FSYLEDLHDACIGCRRCEQVCKKEIPILSVI). [4Fe-4S] cluster contacts are provided by Cys417, Cys420, Cys423, Cys427, Cys455, Cys458, Cys461, and Cys465. [Ni-4Fe-4S] cluster is bound by residues Cys523, Cys552, and Cys587.

Belongs to the Ni-containing carbon monoxide dehydrogenase family. As to quaternary structure, heterotetramer of two alpha and two epsilon subunits. The ACDS complex is made up of alpha, epsilon, beta, gamma and delta subunits with a probable stoichiometry of (alpha(2)epsilon(2))(4)-beta(8)-(gamma(1)delta(1))(8). The cofactor is [4Fe-4S] cluster. [Ni-4Fe-4S] cluster serves as cofactor.

The catalysed reaction is CO + 2 oxidized [2Fe-2S]-[ferredoxin] + H2O = 2 reduced [2Fe-2S]-[ferredoxin] + CO2 + 2 H(+). It functions in the pathway one-carbon metabolism; methanogenesis from acetate. Functionally, part of the ACDS complex that catalyzes the reversible cleavage of acetyl-CoA, allowing growth on acetate as sole source of carbon and energy. The alpha-epsilon subcomponent functions as a carbon monoxide dehydrogenase. The sequence is that of Acetyl-CoA decarbonylase/synthase complex subunit alpha 1 from Methanosarcina mazei (strain ATCC BAA-159 / DSM 3647 / Goe1 / Go1 / JCM 11833 / OCM 88) (Methanosarcina frisia).